Here is a 72-residue protein sequence, read N- to C-terminus: Large ribosomal subunit protein uL29 (72 aa).

The protein belongs to the universal ribosomal protein uL29 family.

This chain is Large ribosomal subunit protein uL29, found in Rhodopirellula baltica (strain DSM 10527 / NCIMB 13988 / SH1).